A 911-amino-acid chain; its full sequence is Golgin IMH1 (911 aa).

Disordered stretches follow at residues 16–41 (LAKGLADDMSPTPSEQQIEDDKSGLP) and 271–314 (KELP…ETVD). Residues 101–280 (FFQDLNNKNN…KELPKAISHQ (180 aa)) are a coiled coil. A compositionally biased stretch (basic residues) spans 286 to 299 (NRRKKNRNKGKKNK). Phosphoserine is present on residues serine 308 and serine 660. 2 coiled-coil regions span residues 312 to 735 (TVDN…ALKH) and 766 to 814 (SKAD…KERQ). Positions 814–850 (QYSDKSGRVSRSGSIGTLANANIDSSPANNSNPTKLE) are disordered. Residues 822-847 (VSRSGSIGTLANANIDSSPANNSNPT) are compositionally biased toward polar residues. Position 827 is a phosphoserine (serine 827). Position 830 is a phosphothreonine (threonine 830). Positions 861–909 (DSEKNEKIAYIKNVLLGFLEHKEQRNQLLPVISMLLQLDSTDEKRLVMS) constitute a GRIP domain.

As to quaternary structure, forms oligomers and is present in high-molecular-mass complexes. Interacts with ARL1.

The protein resides in the cytoplasm. Its subcellular location is the golgi apparatus membrane. Its function is as follows. Involved in vesicular transport between an endosomal compartment and the Golgi apparatus. In Saccharomyces cerevisiae (strain ATCC 204508 / S288c) (Baker's yeast), this protein is Golgin IMH1 (IMH1).